The chain runs to 402 residues: Argininosuccinate synthase (402 aa).

Residue 9-17 participates in ATP binding; it reads AYSGGLDTS. Tyr86 is a binding site for L-citrulline. Gly116 is an ATP binding site. L-aspartate is bound by residues Thr118, Asn122, and Asp123. Residue Asn122 participates in L-citrulline binding. L-citrulline is bound by residues Arg126, Ser174, Ser183, Glu259, and Tyr271.

This sequence belongs to the argininosuccinate synthase family. Type 1 subfamily. In terms of assembly, homotetramer.

Its subcellular location is the cytoplasm. The enzyme catalyses L-citrulline + L-aspartate + ATP = 2-(N(omega)-L-arginino)succinate + AMP + diphosphate + H(+). Its pathway is amino-acid biosynthesis; L-arginine biosynthesis; L-arginine from L-ornithine and carbamoyl phosphate: step 2/3. In Anoxybacillus flavithermus (strain DSM 21510 / WK1), this protein is Argininosuccinate synthase.